Here is a 282-residue protein sequence, read N- to C-terminus: 3-oxoadipate CoA-transferase subunit A (282 aa).

This sequence belongs to the 3-oxoacid CoA-transferase subunit A family. Heterotetramer composed of 2 A and 2 B subunits.

The enzyme catalyses 3-oxoadipate + succinyl-CoA = 3-oxoadipyl-CoA + succinate. The protein operates within aromatic compound metabolism; beta-ketoadipate pathway; acetyl-CoA and succinyl-CoA from 3-oxoadipate: step 1/2. In terms of biological role, catalyzes the CoA transfer from succinate to 3-oxoadipate (beta-ketoadipate). The protein is 3-oxoadipate CoA-transferase subunit A (catI) of Pseudomonas knackmussii (strain DSM 6978 / CCUG 54928 / LMG 23759 / B13).